A 1069-amino-acid polypeptide reads, in one-letter code: Acyl-CoA dehydrogenase family member 10 (1069 aa).

The residue at position 413 (K413) is an N6-succinyllysine. Residue K427 is modified to N6-acetyllysine; alternate. K427 carries the post-translational modification N6-succinyllysine; alternate. Residues 792 to 802 (FAMTEPQVASS), S828, R943, Q1013, and E1044 contribute to the FAD site. K1052 carries the N6-acetyllysine; alternate modification. K1052 carries the post-translational modification N6-succinyllysine; alternate.

The protein belongs to the acyl-CoA dehydrogenase family. The cofactor is FAD.

It catalyses the reaction a 2,3-saturated acyl-CoA + A = a 2,3-dehydroacyl-CoA + AH2. Acyl-CoA dehydrogenase only active with R- and S-2-methyl-C15-CoA. This chain is Acyl-CoA dehydrogenase family member 10 (Acad10), found in Mus musculus (Mouse).